The following is a 470-amino-acid chain: Protein C-ets-2 (470 aa).

A PNT domain is found at 85–170 (ATFSGFKKEQ…EHLEQMIKEN (86 aa)). Ser225 carries the phosphoserine modification. The interval 270 to 291 (ASGKPRDHDSAETGGDSFESSE) is disordered. Phosphoserine is present on residues Ser296, Ser299, and Ser302. The segment at residues 364–444 (IQLWQFLLEL…SGKRYVYRFV (81 aa)) is a DNA-binding region (ETS).

This sequence belongs to the ETS family. Post-translationally, phosphorylation by CDK10 at Ser-225 may create a phosphodegron that targets ETS2 for proteasomal degradation.

It localises to the nucleus. Its function is as follows. Transcription factor activating transcription. Binds specifically the GGA DNA motif in gene promoters and stimulates transcription of those genes. The sequence is that of Protein C-ets-2 (ETS2) from Bos taurus (Bovine).